The primary structure comprises 251 residues: Transcription factor bHLH144 (251 aa).

3 disordered regions span residues 1–20 (MQNNQFPHFSDEVGDRNMHN), 130–161 (YEENDDNEGEEDGGDSEEVSTARTSSRDYGNT), and 173–202 (NNNNNNNSRKQSLSGSASSSNNDGKGRKKM). Residues 9–18 (FSDEVGDRNM) are compositionally biased toward basic and acidic residues. Residues 130-147 (YEENDDNEGEEDGGDSEE) are compositionally biased toward acidic residues. Over residues 148–161 (VSTARTSSRDYGNT) the composition is skewed to polar residues. Over residues 173–192 (NNNNNNNSRKQSLSGSASSS) the composition is skewed to low complexity. A bHLH domain is found at 186–235 (SGSASSSNNDGKGRKKMKKMMGVLRRIVPGGEQMNTACVLDEAVQYLKSL).

As to quaternary structure, homodimer. Interacts with LHW.

It localises to the nucleus. This chain is Transcription factor bHLH144 (BHLH144), found in Arabidopsis thaliana (Mouse-ear cress).